Here is a 268-residue protein sequence, read N- to C-terminus: Helix-loop-helix protein 25 (268 aa).

Positions 1 to 23 are enriched in polar residues; sequence MPKVIQSSMSDYRSVPYNQTPKS. The interval 1-29 is disordered; the sequence is MPKVIQSSMSDYRSVPYNQTPKSASERKR. Residues 92 to 105 form a basic motif region; sequence ERRKVKTEREKIRR. The bHLH domain maps to 92–149; it reads ERRKVKTEREKIRRKKQDDCYAELKFFILNKQMGSYEQRLKLERITILEIIIDYIKHN. A helix-loop-helix motif region spans residues 106–149; sequence KKQDDCYAELKFFILNKQMGSYEQRLKLERITILEIIIDYIKHN.

It localises to the nucleus. Probable transcription factor. Modulates lifespan and also recovery from the developmentally arrested larval state known as dauer, perhaps acting upstream of phosphatase PTEN/daf-18. Regulates expression of genes involved in cell division, cell-cycle regulation, and sexual reproduction, including daf-18. This is Helix-loop-helix protein 25 from Caenorhabditis elegans.